Reading from the N-terminus, the 184-residue chain is Photosystem I assembly protein Ycf4 (184 aa).

Helical transmembrane passes span 20–40 and 64–84; these read GNFF…VVGI and IVMS…WCTI.

The protein belongs to the Ycf4 family.

The protein localises to the plastid. It is found in the chloroplast thylakoid membrane. Seems to be required for the assembly of the photosystem I complex. The polypeptide is Photosystem I assembly protein Ycf4 (Citrus sinensis (Sweet orange)).